We begin with the raw amino-acid sequence, 140 residues long: ATP synthase epsilon chain (140 aa).

Belongs to the ATPase epsilon chain family. F-type ATPases have 2 components, CF(1) - the catalytic core - and CF(0) - the membrane proton channel. CF(1) has five subunits: alpha(3), beta(3), gamma(1), delta(1), epsilon(1). CF(0) has three main subunits: a, b and c.

Its subcellular location is the cell inner membrane. Produces ATP from ADP in the presence of a proton gradient across the membrane. This Janthinobacterium sp. (strain Marseille) (Minibacterium massiliensis) protein is ATP synthase epsilon chain.